A 234-amino-acid polypeptide reads, in one-letter code: Small ribosomal subunit protein uS3 (234 aa).

Residues 39 to 109 form the KH type-2 domain; it reads IRTLINKHYG…EVRIAIYEVK (71 aa).

Belongs to the universal ribosomal protein uS3 family. In terms of assembly, part of the 30S ribosomal subunit. Forms a tight complex with proteins S10 and S14.

In terms of biological role, binds the lower part of the 30S subunit head. Binds mRNA in the 70S ribosome, positioning it for translation. The protein is Small ribosomal subunit protein uS3 of Coprothermobacter proteolyticus (strain ATCC 35245 / DSM 5265 / OCM 4 / BT).